The sequence spans 116 residues: Ribosome-binding factor A (116 aa).

The protein belongs to the RbfA family. As to quaternary structure, monomer. Binds 30S ribosomal subunits, but not 50S ribosomal subunits or 70S ribosomes.

It is found in the cytoplasm. One of several proteins that assist in the late maturation steps of the functional core of the 30S ribosomal subunit. Associates with free 30S ribosomal subunits (but not with 30S subunits that are part of 70S ribosomes or polysomes). Required for efficient processing of 16S rRNA. May interact with the 5'-terminal helix region of 16S rRNA. The chain is Ribosome-binding factor A from Pediococcus pentosaceus (strain ATCC 25745 / CCUG 21536 / LMG 10740 / 183-1w).